Here is a 208-residue protein sequence, read N- to C-terminus: ATP-dependent Clp protease proteolytic subunit 2 (208 aa).

The active-site Nucleophile is serine 102. Residue histidine 127 is part of the active site.

Belongs to the peptidase S14 family. In terms of assembly, fourteen ClpP subunits assemble into 2 heptameric rings which stack back to back to give a disk-like structure with a central cavity, resembling the structure of eukaryotic proteasomes.

It localises to the cytoplasm. It carries out the reaction Hydrolysis of proteins to small peptides in the presence of ATP and magnesium. alpha-casein is the usual test substrate. In the absence of ATP, only oligopeptides shorter than five residues are hydrolyzed (such as succinyl-Leu-Tyr-|-NHMec, and Leu-Tyr-Leu-|-Tyr-Trp, in which cleavage of the -Tyr-|-Leu- and -Tyr-|-Trp bonds also occurs).. Functionally, cleaves peptides in various proteins in a process that requires ATP hydrolysis. Has a chymotrypsin-like activity. Plays a major role in the degradation of misfolded proteins. The protein is ATP-dependent Clp protease proteolytic subunit 2 of Chelativorans sp. (strain BNC1).